Consider the following 72-residue polypeptide: Large ribosomal subunit protein uL29 (72 aa).

This sequence belongs to the universal ribosomal protein uL29 family.

In Prochlorococcus marinus (strain AS9601), this protein is Large ribosomal subunit protein uL29.